An 835-amino-acid polypeptide reads, in one-letter code: Microcephalin (835 aa).

The region spanning 1–93 (MAAPILKDVV…AHIDESLFPA (93 aa)) is the BRCT 1 domain. Phosphoserine is present on residues Ser279, Ser287, Ser296, and Ser333. Disordered regions lie at residues 313–381 (PDQK…RRSI) and 419–443 (DNLK…AQLS). Thr335 carries the post-translational modification Phosphothreonine. The span at 343-361 (LLIHSRPRSSSVKRKRVSH) shows a compositional bias: basic residues. Positions 434-443 (QLPSSPAQLS) are enriched in polar residues. Position 548 is a phosphoserine (Ser548). Positions 555-584 (AVGLKSTQNKGTTSKISNSSEGEAQSEHEP) are disordered. Over residues 559 to 577 (KSTQNKGTTSKISNSSEGE) the composition is skewed to polar residues. BRCT domains are found at residues 640–730 (SGRG…PFEL) and 751–833 (YRGT…NYLL).

Interacts with CDC27 and maybe other components of the APC/C complex. Interacts with histone variant H2AX under DNA damage conditions. Expressed in fetal brain, liver and kidney.

Its subcellular location is the cytoplasm. The protein resides in the cytoskeleton. It is found in the microtubule organizing center. The protein localises to the centrosome. Its function is as follows. Implicated in chromosome condensation and DNA damage induced cellular responses. May play a role in neurogenesis and regulation of the size of the cerebral cortex. This Homo sapiens (Human) protein is Microcephalin.